A 369-amino-acid polypeptide reads, in one-letter code: tRNA/tmRNA (uracil-C(5))-methyltransferase (369 aa).

S-adenosyl-L-methionine-binding residues include Gln190, Tyr218, Asn223, Glu239, and Asp301. Cys326 (nucleophile) is an active-site residue. Glu360 (proton acceptor) is an active-site residue.

Belongs to the class I-like SAM-binding methyltransferase superfamily. RNA M5U methyltransferase family. TrmA subfamily.

It carries out the reaction uridine(54) in tRNA + S-adenosyl-L-methionine = 5-methyluridine(54) in tRNA + S-adenosyl-L-homocysteine + H(+). The catalysed reaction is uridine(341) in tmRNA + S-adenosyl-L-methionine = 5-methyluridine(341) in tmRNA + S-adenosyl-L-homocysteine + H(+). Its function is as follows. Dual-specificity methyltransferase that catalyzes the formation of 5-methyluridine at position 54 (m5U54) in all tRNAs, and that of position 341 (m5U341) in tmRNA (transfer-mRNA). This Vibrio parahaemolyticus serotype O3:K6 (strain RIMD 2210633) protein is tRNA/tmRNA (uracil-C(5))-methyltransferase.